We begin with the raw amino-acid sequence, 64 residues long: Antimicrobial peptide THP2 (64 aa).

The first 28 residues, 1–28 (MRILYLLFSLLFLALQVSPGLSSPKRDM), serve as a signal peptide directing secretion. Disulfide bonds link C31–C57, C36–C51, and C41–C58.

In terms of tissue distribution, expressed in circulating heterophil granulocytes and bone marrow (at protein level).

It localises to the secreted. Antibacterial activity against the Gram-positive bacterium Staphylococcus aureus. Lacks antibacterial activity against the Gram-negative bacterium E.coli K-12. This Meleagris gallopavo (Wild turkey) protein is Antimicrobial peptide THP2.